The sequence spans 313 residues: Cytochrome c biogenesis protein CcsA (313 aa).

The next 8 helical transmembrane spans lie at 9 to 29, 44 to 64, 71 to 91, 111 to 131, 143 to 163, 217 to 237, 244 to 264, and 278 to 298; these read ILTH…LITF, GIIV…ISSG, LYES…IPYF, GFAT…VPAL, MILG…LLVI, VISL…VWAN, WNWD…AIYL, and AIVA…VNLL.

The protein belongs to the CcmF/CycK/Ccl1/NrfE/CcsA family. May interact with Ccs1.

The protein resides in the plastid. Its subcellular location is the chloroplast thylakoid membrane. Required during biogenesis of c-type cytochromes (cytochrome c6 and cytochrome f) at the step of heme attachment. The protein is Cytochrome c biogenesis protein CcsA of Solanum bulbocastanum (Wild potato).